A 67-amino-acid polypeptide reads, in one-letter code: UPF0435 protein SSP0913 (67 aa).

The protein belongs to the UPF0435 family.

This chain is UPF0435 protein SSP0913, found in Staphylococcus saprophyticus subsp. saprophyticus (strain ATCC 15305 / DSM 20229 / NCIMB 8711 / NCTC 7292 / S-41).